The primary structure comprises 276 residues: Diaminopimelate epimerase (276 aa).

Substrate contacts are provided by asparagine 13, glutamine 46, and asparagine 66. The Proton donor role is filled by cysteine 75. Substrate is bound by residues 76–77 (GN), asparagine 159, asparagine 192, and 210–211 (ER). Cysteine 219 (proton acceptor) is an active-site residue. Residue 220–221 (GT) coordinates substrate.

The protein belongs to the diaminopimelate epimerase family. In terms of assembly, homodimer.

It localises to the cytoplasm. It carries out the reaction (2S,6S)-2,6-diaminopimelate = meso-2,6-diaminopimelate. Its pathway is amino-acid biosynthesis; L-lysine biosynthesis via DAP pathway; DL-2,6-diaminopimelate from LL-2,6-diaminopimelate: step 1/1. In terms of biological role, catalyzes the stereoinversion of LL-2,6-diaminopimelate (L,L-DAP) to meso-diaminopimelate (meso-DAP), a precursor of L-lysine and an essential component of the bacterial peptidoglycan. The chain is Diaminopimelate epimerase from Aeromonas hydrophila subsp. hydrophila (strain ATCC 7966 / DSM 30187 / BCRC 13018 / CCUG 14551 / JCM 1027 / KCTC 2358 / NCIMB 9240 / NCTC 8049).